Here is a 550-residue protein sequence, read N- to C-terminus: Arginine--tRNA ligase (550 aa).

The short motif at 130–140 (ANPTGPIHIGG) is the 'HIGH' region element.

The protein belongs to the class-I aminoacyl-tRNA synthetase family. As to quaternary structure, monomer.

Its subcellular location is the cytoplasm. It catalyses the reaction tRNA(Arg) + L-arginine + ATP = L-arginyl-tRNA(Arg) + AMP + diphosphate. This Mycobacterium leprae (strain TN) protein is Arginine--tRNA ligase (argS).